Here is a 164-residue protein sequence, read N- to C-terminus: B-phycoerythrin alpha chain (164 aa).

Residues cysteine 82 and cysteine 139 each contribute to the (2R,3E)-phycoerythrobilin site.

The protein belongs to the phycobiliprotein family. As to quaternary structure, heteromer of 6 alpha, 6 beta and one gamma chain. Contains two covalently linked bilin chromophores.

It is found in the plastid. It localises to the chloroplast thylakoid membrane. In terms of biological role, light-harvesting photosynthetic bile pigment-protein from the phycobiliprotein complex. The chain is B-phycoerythrin alpha chain (cpeA) from Porphyridium sordidum (Red alga).